Consider the following 84-residue polypeptide: Small ribosomal subunit protein uS17 (84 aa).

The protein belongs to the universal ribosomal protein uS17 family. In terms of assembly, part of the 30S ribosomal subunit.

Its function is as follows. One of the primary rRNA binding proteins, it binds specifically to the 5'-end of 16S ribosomal RNA. The sequence is that of Small ribosomal subunit protein uS17 from Photorhabdus laumondii subsp. laumondii (strain DSM 15139 / CIP 105565 / TT01) (Photorhabdus luminescens subsp. laumondii).